Consider the following 63-residue polypeptide: Large ribosomal subunit protein bL28 (63 aa).

It belongs to the bacterial ribosomal protein bL28 family.

This Desulfitobacterium hafniense (strain DSM 10664 / DCB-2) protein is Large ribosomal subunit protein bL28.